Reading from the N-terminus, the 708-residue chain is Probable inactive lysine-specific demethylase JMJ19 (708 aa).

Residues 35 to 59 form a disordered region; that stretch reads VPRDKESPRSVSRQEQTTGFGTDDK. Over residues 43–54 the composition is skewed to polar residues; the sequence is RSVSRQEQTTGF. In terms of domain architecture, JmjN spans 108 to 149; that stretch reads APVFNPTEEEFRDTLSYISSLRDRAEPYGICCVVPPPSWKPP. The JmjC domain maps to 293–454; sequence SSGWNLNSTA…HGDIAVQVNQ (162 aa). Positions 544, 547, 558, 560, 567, 570, 575, and 577 each coordinate Zn(2+). The RING-type; degenerate zinc finger occupies 544 to 581; sequence CCVCLGDLYLSAVNCSCSANRYSCLNHMRKLCACPCDR. The Nuclear localization signal motif lies at 646–653; it reads TRKDVAAG. Positions 678-694 are enriched in basic and acidic residues; that stretch reads AKETLESCSKKSNRPCD. Residues 678–708 form a disordered region; the sequence is AKETLESCSKKSNRPCDNDSSEANAPKKQKQ.

This sequence belongs to the JARID1 histone demethylase family. As to expression, expressed in inflorescences, roots, siliques, leaves and stems.

Its subcellular location is the nucleus. The sequence is that of Probable inactive lysine-specific demethylase JMJ19 from Arabidopsis thaliana (Mouse-ear cress).